A 439-amino-acid chain; its full sequence is Elongation factor 1-alpha 2 (439 aa).

One can recognise a tr-type G domain in the interval K6–I229. The G1 stretch occupies residues G15–S22. G15 to S22 is a binding site for GTP. Positions G71–N75 are G2. The G3 stretch occupies residues D92 to G95. Residues D92–H96 and N154–D157 contribute to the GTP site. The tract at residues N154–D157 is G4. The segment at S193–F195 is G5.

It belongs to the TRAFAC class translation factor GTPase superfamily. Classic translation factor GTPase family. EF-Tu/EF-1A subfamily.

The protein resides in the cytoplasm. This protein promotes the GTP-dependent binding of aminoacyl-tRNA to the A-site of ribosomes during protein biosynthesis. This is Elongation factor 1-alpha 2 (EFA2) from Euplotes crassus.